A 375-amino-acid chain; its full sequence is Tyrosine--tRNA ligase (375 aa).

Residues Y37, Y168, Q172, D175, and Q190 each contribute to the L-tyrosine site. A 'KMSKS' region motif is present at residues 251-255 (KMSKS). K254 serves as a coordination point for ATP.

It belongs to the class-I aminoacyl-tRNA synthetase family. TyrS type 4 subfamily. As to quaternary structure, homodimer.

It localises to the cytoplasm. The enzyme catalyses tRNA(Tyr) + L-tyrosine + ATP = L-tyrosyl-tRNA(Tyr) + AMP + diphosphate + H(+). Catalyzes the attachment of tyrosine to tRNA(Tyr) in a two-step reaction: tyrosine is first activated by ATP to form Tyr-AMP and then transferred to the acceptor end of tRNA(Tyr). This is Tyrosine--tRNA ligase from Pyrococcus furiosus (strain ATCC 43587 / DSM 3638 / JCM 8422 / Vc1).